The sequence spans 220 residues: Serine protease-like protein 51 (220 aa).

A signal peptide spans Met-1–Ala-16. The 198-residue stretch at Val-23–Ala-220 folds into the Peptidase S1 domain. The N-linked (GlcNAc...) asparagine glycan is linked to Asn-33. Cys-64 and Cys-80 are oxidised to a cystine. Residue Asn-92 is glycosylated (N-linked (GlcNAc...) asparagine). A disulfide bridge links Cys-157 with Cys-170.

It belongs to the peptidase S1 family.

The protein resides in the secreted. The protein is Serine protease-like protein 51 of Homo sapiens (Human).